The chain runs to 123 residues: Ribonuclease P protein component (123 aa).

Belongs to the RnpA family. Consists of a catalytic RNA component (M1 or rnpB) and a protein subunit.

The catalysed reaction is Endonucleolytic cleavage of RNA, removing 5'-extranucleotides from tRNA precursor.. Functionally, RNaseP catalyzes the removal of the 5'-leader sequence from pre-tRNA to produce the mature 5'-terminus. It can also cleave other RNA substrates such as 4.5S RNA. The protein component plays an auxiliary but essential role in vivo by binding to the 5'-leader sequence and broadening the substrate specificity of the ribozyme. The sequence is that of Ribonuclease P protein component from Herpetosiphon aurantiacus (strain ATCC 23779 / DSM 785 / 114-95).